We begin with the raw amino-acid sequence, 791 residues long: Nuclear cap-binding protein subunit 1-B (791 aa).

The tract at residues 1–24 (MSRRRHSDENDGGQPHKRRRTSEP) is disordered. Residues 28–240 (EDRLESLICR…CLWAQVQKLK (213 aa)) form the MIF4G domain. The stretch at 641 to 714 (LHSTIRKMNK…SEQKNLFLVI (74 aa)) forms a coiled coil. Residues 664 to 687 (QRLAKQHKHRDSDDNDEDSGRKDG) form a disordered region.

The protein belongs to the NCBP1 family. In terms of assembly, component of the nuclear cap-binding complex (CBC), a heterodimer composed of ncbp1/cbp80 and ncbp2/cbp20 that interacts with m7GpppG-capped RNA. Component of an alternative nuclear cap-binding complex (CBC) composed of ncbp1/cbp80 and ncbp3.

The protein localises to the nucleus. It is found in the cytoplasm. In terms of biological role, component of the cap-binding complex (CBC), which binds cotranscriptionally to the 5'-cap of pre-mRNAs and is involved in various processes such as pre-mRNA splicing, translation regulation, nonsense-mediated mRNA decay, RNA-mediated gene silencing (RNAi) by microRNAs (miRNAs) and mRNA export. The CBC complex is involved in mRNA export from the nucleus, leading to the recruitment of the mRNA export machinery to the 5'-end of mRNA and to mRNA export in a 5' to 3' direction through the nuclear pore. The CBC complex is also involved in mediating U snRNA and intronless mRNAs export from the nucleus. The CBC complex is essential for a pioneer round of mRNA translation, before steady state translation when the CBC complex is replaced by cytoplasmic cap-binding protein eIF4E. The pioneer round of mRNA translation mediated by the CBC complex plays a central role in nonsense-mediated mRNA decay (NMD), NMD only taking place in mRNAs bound to the CBC complex, but not on eIF4E-bound mRNAs. The CBC complex enhances NMD in mRNAs containing at least one exon-junction complex (EJC), promoting the interaction between UPF1 and UPF2. The CBC complex is also involved in 'failsafe' NMD, which is independent of the EJC complex, while it does not participate in Staufen-mediated mRNA decay (SMD). During cell proliferation, the CBC complex is also involved in microRNAs (miRNAs) biogenesis via its interaction with SRRT/ARS2 and is required for miRNA-mediated RNA interference. The CBC complex also acts as a negative regulator of parn, thereby acting as an inhibitor of mRNA deadenylation. In the CBC complex, NCBP1/CBP80 does not bind directly capped RNAs (m7GpppG-capped RNA) but is required to stabilize the movement of the N-terminal loop of NCBP2/CBP20 and lock the CBC into a high affinity cap-binding state with the cap structure. Associates with NCBP3 to form an alternative cap-binding complex (CBC) which plays a key role in mRNA export. The conventional CBC with NCBP2 binds both small nuclear RNA (snRNA) and messenger (mRNA) and is involved in their export from the nucleus whereas the alternative CBC with NCBP3 does not bind snRNA and associates only with mRNA thereby playing a role only in mRNA export. The sequence is that of Nuclear cap-binding protein subunit 1-B (ncbp1-b) from Xenopus laevis (African clawed frog).